A 499-amino-acid chain; its full sequence is Glycerol kinase (499 aa).

Residue Thr11 coordinates ADP. Residues Thr11, Ser12, and Ser13 each contribute to the ATP site. Thr11 is a binding site for sn-glycerol 3-phosphate. ADP is bound at residue Arg15. Arg81, Glu82, Tyr133, and Asp242 together coordinate sn-glycerol 3-phosphate. 5 residues coordinate glycerol: Arg81, Glu82, Tyr133, Asp242, and Gln243. Residues Thr264 and Gly309 each contribute to the ADP site. ATP is bound by residues Thr264, Gly309, Gln313, and Gly414. The ADP site is built by Gly414 and Asn418.

This sequence belongs to the FGGY kinase family.

The enzyme catalyses glycerol + ATP = sn-glycerol 3-phosphate + ADP + H(+). It participates in polyol metabolism; glycerol degradation via glycerol kinase pathway; sn-glycerol 3-phosphate from glycerol: step 1/1. Inhibited by fructose 1,6-bisphosphate (FBP). Key enzyme in the regulation of glycerol uptake and metabolism. Catalyzes the phosphorylation of glycerol to yield sn-glycerol 3-phosphate. This chain is Glycerol kinase, found in Methylibium petroleiphilum (strain ATCC BAA-1232 / LMG 22953 / PM1).